The following is a 190-amino-acid chain: MKRLISCLTIICALNASAAAETTSNPCSRWISFLKPVCQRIHQTWAEGHDDMYFSGYAWHNRYVYSNEKIKSYNETAWGGGLGKSLFDEKGNWHGLYAIAFLDSHRHLEPAVGYAYLKTASVNKDLKAGLGYSVLVTSRVDYDNVPIPGALPWAALFYKRITIAATYIPGSSREGHENGNVLYMLGKISL.

Residues Met1–Ala18 form the signal peptide. Residues His60, Asp103, and Ser104 contribute to the active site.

Belongs to the lipid A palmitoyltransferase family. As to quaternary structure, homodimer.

It localises to the cell outer membrane. The catalysed reaction is a lipid A + a 1,2-diacyl-sn-glycero-3-phosphocholine = a hepta-acyl lipid A + a 2-acyl-sn-glycero-3-phosphocholine. It catalyses the reaction a lipid IVA + a 1,2-diacyl-sn-glycero-3-phosphocholine = a lipid IVB + a 2-acyl-sn-glycero-3-phosphocholine. It carries out the reaction a lipid IIA + a 1,2-diacyl-sn-glycero-3-phosphocholine = a lipid IIB + a 2-acyl-sn-glycero-3-phosphocholine. Functionally, transfers a fatty acid residue from the sn-1 position of a phospholipid to the N-linked hydroxyfatty acid chain on the proximal unit of lipid A or its precursors. The chain is Lipid A acyltransferase PagP from Legionella pneumophila serogroup 1 (strain 2300/99 Alcoy).